A 493-amino-acid polypeptide reads, in one-letter code: Glutamyl-tRNA(Gln) amidotransferase subunit A (493 aa).

Catalysis depends on charge relay system residues Lys79 and Ser159. Ser183 acts as the Acyl-ester intermediate in catalysis.

This sequence belongs to the amidase family. GatA subfamily. As to quaternary structure, heterotrimer of A, B and C subunits.

It catalyses the reaction L-glutamyl-tRNA(Gln) + L-glutamine + ATP + H2O = L-glutaminyl-tRNA(Gln) + L-glutamate + ADP + phosphate + H(+). Functionally, allows the formation of correctly charged Gln-tRNA(Gln) through the transamidation of misacylated Glu-tRNA(Gln) in organisms which lack glutaminyl-tRNA synthetase. The reaction takes place in the presence of glutamine and ATP through an activated gamma-phospho-Glu-tRNA(Gln). This Rhizobium leguminosarum bv. trifolii (strain WSM2304) protein is Glutamyl-tRNA(Gln) amidotransferase subunit A.